The following is a 95-amino-acid chain: Phospholipase A2 inhibitor gammaCdcPLI (95 aa).

Intrachain disulfides connect C2-C26, C5-C12, C19-C30, and C61-C77.

As to quaternary structure, forms dimers or higher order oligomers in a temperature-dependent manner in vitro. Expressed by the liver.

Its subcellular location is the secreted. In terms of biological role, inhibits the enzymatic activity of basic and acidic PLA2 from B.jararacussu and B.pauloensis, respectively, in a dose-dependent manner. Also inhibits myotoxicity and cytotoxicity of BnSp-7 of B.pauloensis. This Crotalus durissus collilineatus (Brazilian rattlesnake) protein is Phospholipase A2 inhibitor gammaCdcPLI.